The primary structure comprises 94 residues: Cytochrome c-551 (94 aa).

An N-terminal signal peptide occupies residues 1–14; sequence MAFTAMTVAPSALA. Residues Cys-24, Cys-27, His-28, and Met-73 each contribute to the heme c site.

Binds 1 heme c group covalently per subunit.

Functionally, efficiently couple electron transfer between the cytochrome bc1 complex and the photosynthetic reaction center. The protein is Cytochrome c-551 of Allochromatium vinosum (strain ATCC 17899 / DSM 180 / NBRC 103801 / NCIMB 10441 / D) (Chromatium vinosum).